We begin with the raw amino-acid sequence, 369 residues long: Putative transport protein YueF (369 aa).

8 consecutive transmembrane segments (helical) span residues 13–33, 34–54, 73–93, 159–179, 213–233, 234–254, 271–291, and 316–336; these read ILFVLLIIFVATKVSFVFQPF, IVFISTLFFPMLIAGILYFIF, LIYLLFIGLLAFISASVGPII, AVFGVVTNITLVIITVPFILF, DTLAAYFQGQLLICLFVGTAC, FIGYLIAGLPYALILGIVMAI, VIVGFMDSPAKALFAIIVVVI, and IILLLIGAGSFGGILGMILAV.

Belongs to the autoinducer-2 exporter (AI-2E) (TC 2.A.86) family.

The protein localises to the cell membrane. In Bacillus subtilis (strain 168), this protein is Putative transport protein YueF (yueF).